A 320-amino-acid polypeptide reads, in one-letter code: Polyprenal reductase 1 (320 aa).

The next 6 membrane-spanning stretches (helical) occupy residues 5–25 (IVWL…LPLV), 64–84 (FFGH…AATW), 143–163 (MHIL…LSLC), 200–220 (PLMK…WGWI), 243–263 (IIPY…AEIV), and 266–286 (LGLL…FGFV).

It belongs to the steroid 5-alpha reductase family. Polyprenal reductase subfamily. Expressed in roots and flowers.

It localises to the cell membrane. It catalyses the reaction a di-trans,poly-cis-dolichal + NADP(+) = a di-trans,poly-cis-polyprenal + NADPH + H(+). It functions in the pathway protein modification; protein glycosylation. In terms of biological role, plays a key role in early steps of protein N-linked glycosylation by being involved in the conversion of polyprenol into dolichol. Acts as a polyprenal reductase that mediates the reduction of polyprenal into dolichal in a NADP-dependent mechanism. Dolichols are required for the synthesis of dolichol-linked monosaccharides and the oligosaccharide precursor used for N-glycosylation. Involved in the regulation of plant growth and reproductive processes. The protein is Polyprenal reductase 1 of Arabidopsis thaliana (Mouse-ear cress).